We begin with the raw amino-acid sequence, 331 residues long: WW domain-containing protein C2F3.14c (331 aa).

The tract at residues 1–184 (MSSSKDCKAT…TNENQAQPSI (184 aa)) is disordered. Residues 9–22 (ATSNVDQTIPASNV) show a composition bias toward polar residues. Residues 23–41 (NSGDFISSNTSSSNSENSN) show a composition bias toward low complexity. Residues 57–89 (SFISENTPKNTFESTQTYENLESISKNEPTSEA) show a composition bias toward polar residues. Residues 105–145 (REPPLPNEPVPEEPLPGEPPLPDEPVPEEPLPGEPPLPNEP) are compositionally biased toward pro residues. Positions 158–184 (SDETVSETSKNDTSNSPTNENQAQPSI) are enriched in polar residues. A WW domain is found at 187–220 (SEGHRIAAIWDPSQQAYYFWDTLTNTTSWNNPLE). The segment at 290–309 (YTRKEMEQMKRRTKEKKEMK) is disordered. Positions 292–309 (RKEMEQMKRRTKEKKEMK) are enriched in basic and acidic residues.

The protein resides in the nucleus. In Schizosaccharomyces pombe (strain 972 / ATCC 24843) (Fission yeast), this protein is WW domain-containing protein C2F3.14c.